The following is a 292-amino-acid chain: Pyridoxal 5'-phosphate synthase subunit PdxS (292 aa).

D-ribose 5-phosphate is bound at residue Asp-22. Residue Lys-79 is the Schiff-base intermediate with D-ribose 5-phosphate of the active site. Gly-151 contacts D-ribose 5-phosphate. Residue Arg-163 participates in D-glyceraldehyde 3-phosphate binding. D-ribose 5-phosphate-binding positions include Gly-212 and Gly-233 to Ser-234.

Belongs to the PdxS/SNZ family. As to quaternary structure, in the presence of PdxT, forms a dodecamer of heterodimers.

It carries out the reaction aldehydo-D-ribose 5-phosphate + D-glyceraldehyde 3-phosphate + L-glutamine = pyridoxal 5'-phosphate + L-glutamate + phosphate + 3 H2O + H(+). It participates in cofactor biosynthesis; pyridoxal 5'-phosphate biosynthesis. Its function is as follows. Catalyzes the formation of pyridoxal 5'-phosphate from ribose 5-phosphate (RBP), glyceraldehyde 3-phosphate (G3P) and ammonia. The ammonia is provided by the PdxT subunit. Can also use ribulose 5-phosphate and dihydroxyacetone phosphate as substrates, resulting from enzyme-catalyzed isomerization of RBP and G3P, respectively. This is Pyridoxal 5'-phosphate synthase subunit PdxS from Ruminiclostridium cellulolyticum (strain ATCC 35319 / DSM 5812 / JCM 6584 / H10) (Clostridium cellulolyticum).